A 520-amino-acid polypeptide reads, in one-letter code: Maturase K (520 aa).

It belongs to the intron maturase 2 family. MatK subfamily.

The protein resides in the plastid. It is found in the chloroplast. In terms of biological role, usually encoded in the trnK tRNA gene intron. Probably assists in splicing its own and other chloroplast group II introns. This is Maturase K from Iris cristata (Dwarf crested iris).